A 330-amino-acid chain; its full sequence is mRNA-capping enzyme (330 aa).

K82 serves as the catalytic N6-GMP-lysine intermediate.

This sequence belongs to the eukaryotic GTase family. In terms of assembly, monomer. Requires Mg(2+) as cofactor. The cofactor is Mn(2+).

The catalysed reaction is a 5'-end diphospho-ribonucleoside in mRNA + GTP + H(+) = a 5'-end (5'-triphosphoguanosine)-ribonucleoside in mRNA + diphosphate. In terms of biological role, mRNA capping. Transfers a GMP cap onto the end of mRNA that terminates with a 5'-diphosphate tail. The chain is mRNA-capping enzyme from Chlorella (PBCV-1).